Here is a 522-residue protein sequence, read N- to C-terminus: 2-isopropylmalate synthase (522 aa).

Positions 5-267 (VIIFDTTLRD…ETGINAKEIH (263 aa)) constitute a Pyruvate carboxyltransferase domain. Mn(2+)-binding residues include Asp-14, His-202, His-204, and Asn-238. The segment at 392–522 (QLRQLVVQSD…MHKNRELGGV (131 aa)) is regulatory domain.

The protein belongs to the alpha-IPM synthase/homocitrate synthase family. LeuA type 1 subfamily. Homodimer. The cofactor is Mn(2+).

The protein resides in the cytoplasm. It catalyses the reaction 3-methyl-2-oxobutanoate + acetyl-CoA + H2O = (2S)-2-isopropylmalate + CoA + H(+). Its pathway is amino-acid biosynthesis; L-leucine biosynthesis; L-leucine from 3-methyl-2-oxobutanoate: step 1/4. Its function is as follows. Catalyzes the condensation of the acetyl group of acetyl-CoA with 3-methyl-2-oxobutanoate (2-ketoisovalerate) to form 3-carboxy-3-hydroxy-4-methylpentanoate (2-isopropylmalate). The sequence is that of 2-isopropylmalate synthase from Shewanella oneidensis (strain ATCC 700550 / JCM 31522 / CIP 106686 / LMG 19005 / NCIMB 14063 / MR-1).